The sequence spans 45 residues: Large ribosomal subunit protein bL34 (45 aa).

The segment at 1–45 (MTKRTLGGTSRKRKRVSGFRVRMRSHTGRRVIRTRRKRGRSRLAV) is disordered. Basic residues predominate over residues 10–45 (SRKRKRVSGFRVRMRSHTGRRVIRTRRKRGRSRLAV).

This sequence belongs to the bacterial ribosomal protein bL34 family.

This Parasynechococcus marenigrum (strain WH8102) protein is Large ribosomal subunit protein bL34.